Reading from the N-terminus, the 445-residue chain is Tubulin beta chain (445 aa).

The MREI motif motif lies at 1–4; that stretch reads MREI. GTP is bound by residues Q11, E69, S138, G142, T143, G144, N204, and N226. Mg(2+) is bound at residue E69. A disordered region spans residues 421 to 445; sequence EYQQYQDATAEEEGEGEEEGDEEVA. The span at 429–445 shows a compositional bias: acidic residues; that stretch reads TAEEEGEGEEEGDEEVA. E438 is modified (5-glutamyl polyglutamate).

The protein belongs to the tubulin family. Dimer of alpha and beta chains. A typical microtubule is a hollow water-filled tube with an outer diameter of 25 nm and an inner diameter of 15 nM. Alpha-beta heterodimers associate head-to-tail to form protofilaments running lengthwise along the microtubule wall with the beta-tubulin subunit facing the microtubule plus end conferring a structural polarity. Microtubules usually have 13 protofilaments but different protofilament numbers can be found in some organisms and specialized cells. The cofactor is Mg(2+). Some glutamate residues at the C-terminus are polyglycylated, resulting in polyglycine chains on the gamma-carboxyl group. Glycylation is mainly limited to tubulin incorporated into axonemes (cilia and flagella) whereas glutamylation is prevalent in neuronal cells, centrioles, axonemes, and the mitotic spindle. Both modifications can coexist on the same protein on adjacent residues, and lowering polyglycylation levels increases polyglutamylation, and reciprocally. The precise function of polyglycylation is still unclear. Post-translationally, some glutamate residues at the C-terminus are polyglutamylated, resulting in polyglutamate chains on the gamma-carboxyl group. Polyglutamylation plays a key role in microtubule severing by spastin (SPAST). SPAST preferentially recognizes and acts on microtubules decorated with short polyglutamate tails: severing activity by SPAST increases as the number of glutamates per tubulin rises from one to eight, but decreases beyond this glutamylation threshold. In terms of tissue distribution, brain.

Its subcellular location is the cytoplasm. It localises to the cytoskeleton. Tubulin is the major constituent of microtubules, a cylinder consisting of laterally associated linear protofilaments composed of alpha- and beta-tubulin heterodimers. Microtubules grow by the addition of GTP-tubulin dimers to the microtubule end, where a stabilizing cap forms. Below the cap, tubulin dimers are in GDP-bound state, owing to GTPase activity of alpha-tubulin. The sequence is that of Tubulin beta chain from Pseudopleuronectes americanus (Winter flounder).